The primary structure comprises 348 residues: Ileal sodium/bile acid cotransporter (348 aa).

Residues Met-1–Asn-28 are Extracellular-facing. Asn-10 carries an N-linked (GlcNAc...) asparagine glycan. A helical membrane pass occupies residues Ile-29–Met-49. Residues Gly-50–Thr-82 are Cytoplasmic-facing. A helical transmembrane segment spans residues Gly-83–Ile-103. The Extracellular portion of the chain corresponds to Gly-104–Ser-126. Residues Val-127–Ile-147 form a helical membrane-spanning segment. The Cytoplasmic portion of the chain corresponds to Tyr-148–Ser-157. A helical transmembrane segment spans residues Ile-158–Ile-178. Topologically, residues Gly-179 to Lys-195 are extracellular. A helical transmembrane segment spans residues Ile-196–Tyr-216. Topologically, residues Gln-217–Pro-224 are cytoplasmic. Residues Lys-225–Ala-245 form a helical membrane-spanning segment. Over Arg-246–Asn-284 the chain is Extracellular. The chain crosses the membrane as a helical span at residues Val-285–Leu-305. Over Gly-306–Lys-348 the chain is Cytoplasmic. The span at Ala-320–Gly-329 shows a compositional bias: basic and acidic residues. Positions Ala-320–Lys-348 are disordered. At Ser-335 the chain carries Phosphoserine.

The protein belongs to the bile acid:sodium symporter (BASS) (TC 2.A.28) family. As to quaternary structure, monomer and homodimer. As to expression, mainly expressed in ileum and kidney, lower expression in cecum.

Its subcellular location is the membrane. The catalysed reaction is taurocholate(out) + 2 Na(+)(out) = taurocholate(in) + 2 Na(+)(in). It catalyses the reaction cholate(out) + 2 Na(+)(out) = cholate(in) + 2 Na(+)(in). It carries out the reaction taurochenodeoxycholate(out) + 2 Na(+)(out) = taurochenodeoxycholate(in) + 2 Na(+)(in). The enzyme catalyses tauroursodeoxycholate(out) + 2 Na(+)(out) = tauroursodeoxycholate(in) + 2 Na(+)(in). The catalysed reaction is glycocholate(out) + 2 Na(+)(out) = glycocholate(in) + 2 Na(+)(in). It catalyses the reaction tauronorcholate(out) + 2 Na(+)(out) = tauronorcholate(in) + 2 Na(+)(in). It carries out the reaction tauroallocholate(out) + 2 Na(+)(out) = tauroallocholate(in) + 2 Na(+)(in). The enzyme catalyses taurodeoxycholate(out) + 2 Na(+)(out) = taurodeoxycholate(in) + 2 Na(+)(in). The catalysed reaction is tauro-beta-muricholate(out) + 2 Na(+)(out) = tauro-beta-muricholate(in) + 2 Na(+)(in). In terms of biological role, plays a critical role in the sodium-dependent reabsorption of bile acids from the lumen of the small intestine. Transports various bile acids, unconjugated or conjugated, such as cholate and taurocholate. Also responsible for bile acid transport in the renal proximal tubules, a salvage mechanism that helps conserve bile acids. Works collaboratively with the Na(+)-taurocholate cotransporting polypeptide (NTCP), the organic solute transporter (OST), and the bile salt export pump (BSEP), to ensure efficacious biological recycling of bile acids during enterohepatic circulation. The polypeptide is Ileal sodium/bile acid cotransporter (SLC10A2) (Homo sapiens (Human)).